Reading from the N-terminus, the 500-residue chain is Carnosic acid synthase (500 aa).

A helical membrane pass occupies residues 4-24 (LILLSLAFLASCVVAYSRRRP). Cysteine 443 is a binding site for heme.

Belongs to the cytochrome P450 family. Requires heme as cofactor. As to expression, expressed in leaf glandular trichomes.

It is found in the membrane. The enzyme catalyses 11-hydroxyferruginol + 3 reduced [NADPH--hemoprotein reductase] + 3 O2 = carnosate + 3 oxidized [NADPH--hemoprotein reductase] + 4 H2O + 4 H(+). It carries out the reaction miltiradiene + 2 reduced [NADPH--hemoprotein reductase] + 2 O2 = miltiradien-20-al + 2 oxidized [NADPH--hemoprotein reductase] + 3 H2O + 2 H(+). The catalysed reaction is ferruginol + 3 reduced [NADPH--hemoprotein reductase] + 3 O2 = pisiferate + 3 oxidized [NADPH--hemoprotein reductase] + 4 H2O + 4 H(+). The protein operates within secondary metabolite biosynthesis; terpenoid biosynthesis. Functionally, monooxygenase involved in the biosynthesis of carnosate, a potent antioxidant labdane-related diterpene natural product. Catalyzes the oxidation of 11-hydroxyferruginol to produce carnosate. Mediates the conversion of miltiradien into miltiradien-20-al. Also involved in the production of pisiferic acid and derivative products from ferruginol. The protein is Carnosic acid synthase of Salvia pomifera (Apple sage).